Here is a 233-residue protein sequence, read N- to C-terminus: Large ribosomal subunit protein uL1 (233 aa).

The protein belongs to the universal ribosomal protein uL1 family. Part of the 50S ribosomal subunit.

Binds directly to 23S rRNA. The L1 stalk is quite mobile in the ribosome, and is involved in E site tRNA release. Its function is as follows. Protein L1 is also a translational repressor protein, it controls the translation of the L11 operon by binding to its mRNA. The protein is Large ribosomal subunit protein uL1 of Geobacillus sp. (strain WCH70).